Reading from the N-terminus, the 451-residue chain is Alpha-galactosidase (451 aa).

Position 5–71 (5–71 (PKITFIGAGS…ASGRITCHTN (67 aa))) interacts with NAD(+). Asparagine 151 is a binding site for substrate. Position 173 (cysteine 173) interacts with Mn(2+). The Proton donor role is filled by histidine 174. Histidine 203 contacts Mn(2+). Residue arginine 287 coordinates substrate.

It belongs to the glycosyl hydrolase 4 family. As to quaternary structure, homodimer. Requires Mn(2+) as cofactor. It depends on NAD(+) as a cofactor.

The enzyme catalyses Hydrolysis of terminal, non-reducing alpha-D-galactose residues in alpha-D-galactosides, including galactose oligosaccharides, galactomannans and galactolipids.. This chain is Alpha-galactosidase (melA), found in Salmonella typhimurium (strain LT2 / SGSC1412 / ATCC 700720).